The primary structure comprises 126 residues: UPF0102 protein Mlg_2205 (126 aa).

The protein belongs to the UPF0102 family.

This Alkalilimnicola ehrlichii (strain ATCC BAA-1101 / DSM 17681 / MLHE-1) protein is UPF0102 protein Mlg_2205.